The sequence spans 308 residues: Small ribosomal subunit protein uS5c (308 aa).

A chloroplast-targeting transit peptide spans 1-55 (MATTATTTPSATSLTTLHRRIPLFPTTTTLLSLSSSSKPLFLSLSSTRSFPTHLY). In terms of domain architecture, S5 DRBM spans 152 to 215 (FEENVVQVRR…VDARRNIITV (64 aa)).

As to quaternary structure, component of the chloroplast small ribosomal subunit (SSU). Mature 70S chloroplast ribosomes of higher plants consist of a small (30S) and a large (50S) subunit. The 30S small subunit contains 1 molecule of ribosomal RNA (16S rRNA) and 24 different proteins. The 50S large subunit contains 3 rRNA molecules (23S, 5S and 4.5S rRNA) and 33 different proteins. uS5c binds directly to 16S ribosomal RNA.

It is found in the plastid. It localises to the chloroplast. Its function is as follows. Component of the chloroplast ribosome (chloro-ribosome), a dedicated translation machinery responsible for the synthesis of chloroplast genome-encoded proteins, including proteins of the transcription and translation machinery and components of the photosynthetic apparatus. In Spinacia oleracea (Spinach), this protein is Small ribosomal subunit protein uS5c (rps5).